The sequence spans 540 residues: 2,3-bisphosphoglycerate-independent phosphoglycerate mutase (540 aa).

Residues Asp-24 and Ser-74 each coordinate Mn(2+). The Phosphoserine intermediate role is filled by Ser-74. Substrate is bound by residues His-135, 165–166 (RD), Arg-197, Arg-203, 268–271 (RPDR), and Lys-341. Asp-408, His-412, Asp-449, His-450, and His-467 together coordinate Mn(2+).

The protein belongs to the BPG-independent phosphoglycerate mutase family. Monomer. Mn(2+) serves as cofactor.

It carries out the reaction (2R)-2-phosphoglycerate = (2R)-3-phosphoglycerate. Its pathway is carbohydrate degradation; glycolysis; pyruvate from D-glyceraldehyde 3-phosphate: step 3/5. Catalyzes the interconversion of 2-phosphoglycerate and 3-phosphoglycerate. This Prochlorococcus marinus (strain MIT 9313) protein is 2,3-bisphosphoglycerate-independent phosphoglycerate mutase.